The following is a 190-amino-acid chain: Elongation factor P-like protein (190 aa).

It belongs to the elongation factor P family.

The protein is Elongation factor P-like protein of Klebsiella pneumoniae (strain 342).